We begin with the raw amino-acid sequence, 224 residues long: DeSI-like protein At4g17486 (224 aa).

The PPPDE domain occupies 26-163 (TPVYLNVYDL…FCNCLLPESI (138 aa)). Active-site residues include His-51 and Cys-125. The disordered stretch occupies residues 176-201 (EFSDEDESNSEASSVSDEEGSEQHLI).

Belongs to the DeSI family.

The chain is DeSI-like protein At4g17486 from Arabidopsis thaliana (Mouse-ear cress).